The primary structure comprises 456 residues: Protein king tubby (456 aa).

The disordered stretch occupies residues His-111 to Gly-202. Residues Pro-120 to Asp-152 are compositionally biased toward polar residues. Ser-149 carries the post-translational modification Phosphoserine.

It belongs to the TUB family.

The protein localises to the cytoplasm. It is found in the nucleus. Its subcellular location is the cell projection. It localises to the cilium membrane. The protein resides in the rhabdomere. This Drosophila pseudoobscura pseudoobscura (Fruit fly) protein is Protein king tubby.